The chain runs to 446 residues: NADH-ubiquinone oxidoreductase chain 4 (446 aa).

13 helical membrane-spanning segments follow: residues 4-24, 56-76, 93-113, 114-134, 139-159, 182-202, 218-238, 245-265, 272-292, 297-317, 330-350, 373-393, and 426-446; these read IIFFLLFLIPFCFINNMYWMV, MLSYGLILLSLWICSLMLLAS, IIILLLLLILTFSSMSLFMFY, LFFESSLIPTLFLILGWGYQP, AGLYLLFYTLLVSLPMLIGIF, LLYFCLLCAFLVKMPMFLVHL, ILAGIMLKLGGYGMLRVISFL, YSFVWISISLVGGVLVSLVCL, ALIAYSSVAHMGIVLSGLLTM, LCGSYTLMIAHGLCSSGLFCL, MLINKGLLNFMPSMTLWWFLL, IVSWSWISMILLSFLSFFSAA, and LLHWLPLNLLILKSESFMLWL.

The protein belongs to the complex I subunit 4 family.

The protein localises to the mitochondrion membrane. The catalysed reaction is a ubiquinone + NADH + 5 H(+)(in) = a ubiquinol + NAD(+) + 4 H(+)(out). Core subunit of the mitochondrial membrane respiratory chain NADH dehydrogenase (Complex I) that is believed to belong to the minimal assembly required for catalysis. Complex I functions in the transfer of electrons from NADH to the respiratory chain. The immediate electron acceptor for the enzyme is believed to be ubiquinone. The chain is NADH-ubiquinone oxidoreductase chain 4 (mt:ND4) from Drosophila melanogaster (Fruit fly).